We begin with the raw amino-acid sequence, 529 residues long: Bifunctional purine biosynthesis protein PurH (529 aa).

The MGS-like domain occupies 1–148; it reads MQQRRPVRRA…KNHKDVAIVV (148 aa). An N6-acetyllysine modification is found at K287.

The protein belongs to the PurH family.

The catalysed reaction is (6R)-10-formyltetrahydrofolate + 5-amino-1-(5-phospho-beta-D-ribosyl)imidazole-4-carboxamide = 5-formamido-1-(5-phospho-D-ribosyl)imidazole-4-carboxamide + (6S)-5,6,7,8-tetrahydrofolate. The enzyme catalyses IMP + H2O = 5-formamido-1-(5-phospho-D-ribosyl)imidazole-4-carboxamide. It functions in the pathway purine metabolism; IMP biosynthesis via de novo pathway; 5-formamido-1-(5-phospho-D-ribosyl)imidazole-4-carboxamide from 5-amino-1-(5-phospho-D-ribosyl)imidazole-4-carboxamide (10-formyl THF route): step 1/1. Its pathway is purine metabolism; IMP biosynthesis via de novo pathway; IMP from 5-formamido-1-(5-phospho-D-ribosyl)imidazole-4-carboxamide: step 1/1. The sequence is that of Bifunctional purine biosynthesis protein PurH from Escherichia coli O127:H6 (strain E2348/69 / EPEC).